The sequence spans 839 residues: MVNFTIDQIRAIMDRRENIRNMSVIAHVDHGKTTLSDSLIQRAGIIADKVSGDMRYMSCRADEQERGITIKSSSVSLHFEMPKEDKLPAGCTSHEFLINLIDSPGHVDFSSEVTAALRVTDGALVVIDCVEGVCVQTETVLRQAVAERIKPVLFVNKVDRFLLELQLNTEEAYLSFRRAIESVNVIVGNTEDKEFGDVTVSPEKGTVAFGSGLHGWGFTLGRFAKLYAAKFGVPEDKLMGRLWGDSYFDATAKKWTSNPQSADGKALPRAFCQFVLEPIYQLTRAIVDEDAVKLEKMMKTLQITLAPEDAEIKGKQLVKAVMRKFLPAADAILSMIVTHLPSPLVAQKYRCANLYEGPMDDECAVAIQKCDPNGPLMMYVSKMVPTSDKGRFYAFGRVFSGIIRTGQKVRIMGVNYVPGKKDDLFLKSIQRTVLMMGRKTEQIEDCPCGNIVGLVGVDQFLVKSGTITTSEVAHNIRVMKFSVSPVVRVAVEPKNPSDLPKLVEGLKRLAKSDPCVLCYSEESGEHIVAGAGELHLEICLKDLAEDHAGIEIKTTDPVVSFRESVSEESSIMCLSKSPNKHNRLFMKASPISMELQDLIEAGSDISSKDDPKARANYLADNHEWDKNDAMNIWSFGPEGNGANLLVNVTKGVQYLNEIKDSFVGAFQWATKEGVVCDENMRGIRFNLYDVTLHTDAIHRGGGQIIPTARRVLYAAELTASPTLLEPIYLVEITAPENAIGGIYSVLNRRRGIVIGEERRIGSPLFSVKAHLPVLESFGFTADLRSHTAGQAFPQCVFDHWASIGVVNKDKKATEVALATRKRKGLAPEIPDLDKFHEKL.

Residues 17-248 enclose the tr-type G domain; sequence ENIRNMSVIA…MGRLWGDSYF (232 aa). Residues 26–33, 156–159, and 211–213 each bind GTP; these read AHVDHGKT, NKVD, and SGL. Histidine 698 carries the post-translational modification Diphthamide.

Belongs to the TRAFAC class translation factor GTPase superfamily. Classic translation factor GTPase family. EF-G/EF-2 subfamily. Phosphorylation by EF-2 kinase completely inactivates EF-2.

It localises to the cytoplasm. It catalyses the reaction GTP + H2O = GDP + phosphate + H(+). Functionally, catalyzes the GTP-dependent ribosomal translocation step during translation elongation. During this step, the ribosome changes from the pre-translocational (PRE) to the post-translocational (POST) state as the newly formed A-site-bound peptidyl-tRNA and P-site-bound deacylated tRNA move to the P and E sites, respectively. Catalyzes the coordinated movement of the two tRNA molecules, the mRNA and conformational changes in the ribosome. This is Elongation factor 2 (efbA) from Dictyostelium discoideum (Social amoeba).